Reading from the N-terminus, the 92-residue chain is U21-hexatoxin-Hi1a (92 aa).

An N-terminal signal peptide occupies residues 1–19 (MKTILSMLIFVALFAAIVG). Cystine bridges form between cysteine 41–cysteine 55, cysteine 48–cysteine 67, cysteine 54–cysteine 82, and cysteine 85–cysteine 92.

This sequence belongs to the neurotoxin 21 family. In terms of tissue distribution, expressed by the venom gland.

The protein localises to the secreted. Functionally, potent insecticidal toxin with probable ion channel impairing activity. In vivo, reversibly paralyzes all flies within 30 minutes, even at low dose (0.3 nmol/g). The chain is U21-hexatoxin-Hi1a from Hadronyche infensa (Fraser island funnel-web spider).